The sequence spans 331 residues: Lipoyl synthase (331 aa).

Residues 1–14 (MSTQLDASQPSNDV) show a composition bias toward polar residues. A disordered region spans residues 1-32 (MSTQLDASQPSNDVASPAAYDPTQKQKSQAKT). Residues cysteine 78, cysteine 83, cysteine 89, cysteine 104, cysteine 108, cysteine 111, and serine 318 each contribute to the [4Fe-4S] cluster site. One can recognise a Radical SAM core domain in the interval 89-307 (CFGKGTATFM…EREAYAMGFS (219 aa)).

Belongs to the radical SAM superfamily. Lipoyl synthase family. [4Fe-4S] cluster is required as a cofactor.

The protein localises to the cytoplasm. The enzyme catalyses [[Fe-S] cluster scaffold protein carrying a second [4Fe-4S](2+) cluster] + N(6)-octanoyl-L-lysyl-[protein] + 2 oxidized [2Fe-2S]-[ferredoxin] + 2 S-adenosyl-L-methionine + 4 H(+) = [[Fe-S] cluster scaffold protein] + N(6)-[(R)-dihydrolipoyl]-L-lysyl-[protein] + 4 Fe(3+) + 2 hydrogen sulfide + 2 5'-deoxyadenosine + 2 L-methionine + 2 reduced [2Fe-2S]-[ferredoxin]. It functions in the pathway protein modification; protein lipoylation via endogenous pathway; protein N(6)-(lipoyl)lysine from octanoyl-[acyl-carrier-protein]: step 2/2. In terms of biological role, catalyzes the radical-mediated insertion of two sulfur atoms into the C-6 and C-8 positions of the octanoyl moiety bound to the lipoyl domains of lipoate-dependent enzymes, thereby converting the octanoylated domains into lipoylated derivatives. The polypeptide is Lipoyl synthase (Bordetella avium (strain 197N)).